A 340-amino-acid chain; its full sequence is Tryptophan--tRNA ligase (340 aa).

Residues 11–13 (RPT) and 19–20 (GH) each bind ATP. Positions 12–20 (PTGKLHLGH) match the 'HIGH' region motif. Asp-140 is an L-tryptophan binding site. ATP-binding positions include 152–154 (GND), Leu-194, and 202–206 (KMSKS). Positions 202–206 (KMSKS) match the 'KMSKS' region motif.

This sequence belongs to the class-I aminoacyl-tRNA synthetase family. In terms of assembly, homodimer.

Its subcellular location is the cytoplasm. It catalyses the reaction tRNA(Trp) + L-tryptophan + ATP = L-tryptophyl-tRNA(Trp) + AMP + diphosphate + H(+). In terms of biological role, catalyzes the attachment of tryptophan to tRNA(Trp). This is Tryptophan--tRNA ligase from Streptococcus mutans serotype c (strain ATCC 700610 / UA159).